Consider the following 150-residue polypeptide: Large ribosomal subunit protein eL19 (150 aa).

A disordered region spans residues 56–90 (RGISSGRLKERKHKRRSKGEGRKHGSRKGKSGART).

Belongs to the eukaryotic ribosomal protein eL19 family. In terms of assembly, part of the 50S ribosomal subunit.

Binds to the 23S rRNA. The polypeptide is Large ribosomal subunit protein eL19 (Sulfolobus acidocaldarius (strain ATCC 33909 / DSM 639 / JCM 8929 / NBRC 15157 / NCIMB 11770)).